Reading from the N-terminus, the 184-residue chain is uncharacterized protein (184 aa).

This is an uncharacterized protein from Clostridium acetobutylicum (strain ATCC 824 / DSM 792 / JCM 1419 / IAM 19013 / LMG 5710 / NBRC 13948 / NRRL B-527 / VKM B-1787 / 2291 / W).